The chain runs to 316 residues: MGVRAQPLLARSLITTTQPWILSARSKPSSLLSQPWNKTVHNQAHVAEQPTDPANMEKLVGRHHPLPIRSEFVGSTPIDTATLEKIEVGAGLHRIPVSISDWTAYGIVRFLRFFADLFFRKQYVHRAVVLETVAAVPGMVAGMLRHLTSLRLMRHDGGWISHLLSEAENERLHLLTWMKVCQPSLFERMLVALVQTLFFNVYFLAYMLFPKTAHRMVGYLEEEAIISYTHFLAEIDAGNIPNGPAPKLAIDYWNLKEDATVRDVVLAVRADEANHRDMNHHFADRIVIHQEDLRHMVTADSLKPIVKLSKVDIKSD.

The transit peptide at 1–26 directs the protein to the mitochondrion; it reads MGVRAQPLLARSLITTTQPWILSARS. A helical membrane pass occupies residues 124–144; it reads VHRAVVLETVAAVPGMVAGML. Fe cation is bound by residues Glu-131, Glu-170, and His-173. A helical membrane pass occupies residues 189–209; it reads MLVALVQTLFFNVYFLAYMLF. Glu-221, Glu-272, and His-275 together coordinate Fe cation.

Belongs to the alternative oxidase family. The cofactor is Fe cation.

The protein localises to the mitochondrion inner membrane. The enzyme catalyses 2 a ubiquinol + O2 = 2 a ubiquinone + 2 H2O. Functionally, alternative oxidase which function may be to reoxidize reducing equivalents produced by glycolysis such as ubiquinol. The chain is Ubiquinol oxidase, mitochondrial (AOX) from Batrachochytrium dendrobatidis (strain JAM81 / FGSC 10211) (Frog chytrid fungus).